The following is a 340-amino-acid chain: MEPSWLQELMAHPFLLLILLCMSLLLFQVIRLYQRRRWTIRAMHLFPAPPAHWFYGHKESYPVKEFEVYPELMEKYPCAVPLWVGPFTMFFNIHDPDYVKILLKRQDPKSAVSHKILESWVGRGLVTLDGSKWKKHRQIVKPGFNISILKIFITMMSKSVRMMLNKWEEHIAQNSRLELFQHVSLMTLDSIMKCAFSHQGSIQLDSTLDSYLKAVFNLSKISNQRMNNFLHHNDLVFKFSSQGQIFSKFNQELHQFTEKVIQDRKESLKDKLKQDTTQKRRQDFLDILLSAKSENTKDFSEADLQAEVKTFMFAGHDTTTTAISWIFYCLAKYPEHQQRC.

Residues Met-1–Leu-9 lie on the Cytoplasmic side of the membrane. Residues Met-10–Ile-30 form a helical; Signal-anchor for type II membrane protein membrane-spanning segment. At Arg-31–Cys-340 the chain is on the lumenal side.

The protein belongs to the cytochrome P450 family. Heme serves as cofactor. As to expression, detected at low levels in mammary gland and mammary carcinoma.

The protein localises to the membrane. The polypeptide is Putative inactive cytochrome P450 family member 4Z2 (CYP4Z2P) (Homo sapiens (Human)).